We begin with the raw amino-acid sequence, 150 residues long: Phosphopantetheine adenylyltransferase (150 aa).

Position 9 (Thr9) interacts with substrate. ATP is bound by residues Thr9–Phe10 and His17. The substrate site is built by Lys41, Thr73, and Arg87. ATP is bound by residues Gly88 to Arg90, Glu98, and Leu122 to Thr128.

The protein belongs to the bacterial CoaD family. Homohexamer. Mg(2+) serves as cofactor.

It is found in the cytoplasm. It catalyses the reaction (R)-4'-phosphopantetheine + ATP + H(+) = 3'-dephospho-CoA + diphosphate. The protein operates within cofactor biosynthesis; coenzyme A biosynthesis; CoA from (R)-pantothenate: step 4/5. Reversibly transfers an adenylyl group from ATP to 4'-phosphopantetheine, yielding dephospho-CoA (dPCoA) and pyrophosphate. The protein is Phosphopantetheine adenylyltransferase of Bacteroides fragilis (strain ATCC 25285 / DSM 2151 / CCUG 4856 / JCM 11019 / LMG 10263 / NCTC 9343 / Onslow / VPI 2553 / EN-2).